The chain runs to 306 residues: Glutaminase (306 aa).

Residues serine 64, asparagine 115, glutamate 159, asparagine 166, tyrosine 190, tyrosine 242, and valine 260 each coordinate substrate.

It belongs to the glutaminase family. Homotetramer.

It carries out the reaction L-glutamine + H2O = L-glutamate + NH4(+). The chain is Glutaminase from Vibrio vulnificus (strain YJ016).